The chain runs to 818 residues: Elongation factor G, mitochondrial (818 aa).

Residues 1 to 23 (MFLGRAASRTCRHSQPLRVAARA) constitute a mitochondrion transit peptide. The tract at residues 67 to 96 (MASTATATKPTEEASSSDQPPAPAHKLTDN) is disordered. Residues 69 to 85 (STATATKPTEEASSSDQ) are compositionally biased toward polar residues. Residues 102 to 390 (TFQRNIGISA…GVCEYLPNPS (289 aa)) form the tr-type G domain. GTP-binding positions include 111–118 (AHIDSGKT), 188–192 (DTPGH), and 242–245 (NKMD).

Belongs to the TRAFAC class translation factor GTPase superfamily. Classic translation factor GTPase family. EF-G/EF-2 subfamily.

The protein localises to the mitochondrion. Its pathway is protein biosynthesis; polypeptide chain elongation. In terms of biological role, mitochondrial GTPase that catalyzes the GTP-dependent ribosomal translocation step during translation elongation. During this step, the ribosome changes from the pre-translocational (PRE) to the post-translocational (POST) state as the newly formed A-site-bound peptidyl-tRNA and P-site-bound deacylated tRNA move to the P and E sites, respectively. Catalyzes the coordinated movement of the two tRNA molecules, the mRNA and conformational changes in the ribosome. The polypeptide is Elongation factor G, mitochondrial (Coprinopsis cinerea (strain Okayama-7 / 130 / ATCC MYA-4618 / FGSC 9003) (Inky cap fungus)).